The chain runs to 227 residues: Ribose-5-phosphate isomerase A (227 aa).

Substrate is bound by residues 30–33 (TGST), 86–89 (DGAD), and 99–102 (KGMG). The active-site Proton acceptor is Glu108. Lys126 is a binding site for substrate.

It belongs to the ribose 5-phosphate isomerase family. As to quaternary structure, homodimer.

The enzyme catalyses aldehydo-D-ribose 5-phosphate = D-ribulose 5-phosphate. The protein operates within carbohydrate degradation; pentose phosphate pathway; D-ribose 5-phosphate from D-ribulose 5-phosphate (non-oxidative stage): step 1/1. In terms of biological role, catalyzes the reversible conversion of ribose-5-phosphate to ribulose 5-phosphate. This chain is Ribose-5-phosphate isomerase A, found in Thermus thermophilus (strain ATCC 27634 / DSM 579 / HB8).